The following is a 468-amino-acid chain: MVVTRIAPSPTGDPHVGTAYIALFNYAWARRNGGRFIVRIEDTDRARYVPGAEERILAALKWLGLSYDEGPDVGGPHGPYRQSERLPLYQKYAEELLKRGWAYRAFETPEELEQIRKEKGGYDGRARNIPPEEAEERARRGEPHVIRLKVPRPGTTEVKDELRGVVVYDNQEIPDVVLLKSDGYPTYHLANVVDDHLMGVTDVIRAEEWLVSTPIHVLLYRAFGWEAPRFYHMPLLRNPDKTKISKRKSHTSLDWYKAEGFLPEALRNYLCLMGFSMPDGREIFTLEEFIQAFTWERVSLGGPVFDLEKLRWMNGKYIREVLSLEEVAERVKPFLREAGLSWESEAYLRRAVELMRPRFDTLKEFPEKARYLFTEDYPVSEKAQRKLEEGLPLLKELYPRLRTQEEWTEAALEALLRGFAAEKGVKLGQVAQPLRAALTGSLETPGLFEILALLGKERALRRLERALA.

A 'HIGH' region motif is present at residues 8 to 18 (PSPTGDPHVGT). Positions 243–247 (KISKR) match the 'KMSKS' region motif. Lysine 246 contacts ATP.

This sequence belongs to the class-I aminoacyl-tRNA synthetase family. Glutamate--tRNA ligase type 1 subfamily. Monomer.

The protein localises to the cytoplasm. It catalyses the reaction tRNA(Glu) + L-glutamate + ATP = L-glutamyl-tRNA(Glu) + AMP + diphosphate. Its function is as follows. Catalyzes the attachment of glutamate to tRNA(Glu) in a two-step reaction: glutamate is first activated by ATP to form Glu-AMP and then transferred to the acceptor end of tRNA(Glu). The protein is Glutamate--tRNA ligase of Thermus thermophilus (strain ATCC BAA-163 / DSM 7039 / HB27).